The following is a 365-amino-acid chain: Flagellar P-ring protein (365 aa).

An N-terminal signal peptide occupies residues 1–19 (MIKFLSALILLLVTTAAQA).

This sequence belongs to the FlgI family. The basal body constitutes a major portion of the flagellar organelle and consists of four rings (L,P,S, and M) mounted on a central rod.

It localises to the periplasm. The protein localises to the bacterial flagellum basal body. Functionally, assembles around the rod to form the L-ring and probably protects the motor/basal body from shearing forces during rotation. In Shigella dysenteriae serotype 1 (strain Sd197), this protein is Flagellar P-ring protein.